The sequence spans 201 residues: Imidazole glycerol phosphate synthase subunit HisH (201 aa).

In terms of domain architecture, Glutamine amidotransferase type-1 spans 1–201 (MVFIADYGAG…LKVLANFAEL (201 aa)). Catalysis depends on Cys79, which acts as the Nucleophile. Residues His183 and Glu185 contribute to the active site.

As to quaternary structure, heterodimer of HisH and HisF.

The protein localises to the cytoplasm. The catalysed reaction is 5-[(5-phospho-1-deoxy-D-ribulos-1-ylimino)methylamino]-1-(5-phospho-beta-D-ribosyl)imidazole-4-carboxamide + L-glutamine = D-erythro-1-(imidazol-4-yl)glycerol 3-phosphate + 5-amino-1-(5-phospho-beta-D-ribosyl)imidazole-4-carboxamide + L-glutamate + H(+). The enzyme catalyses L-glutamine + H2O = L-glutamate + NH4(+). Its pathway is amino-acid biosynthesis; L-histidine biosynthesis; L-histidine from 5-phospho-alpha-D-ribose 1-diphosphate: step 5/9. Functionally, IGPS catalyzes the conversion of PRFAR and glutamine to IGP, AICAR and glutamate. The HisH subunit catalyzes the hydrolysis of glutamine to glutamate and ammonia as part of the synthesis of IGP and AICAR. The resulting ammonia molecule is channeled to the active site of HisF. The protein is Imidazole glycerol phosphate synthase subunit HisH of Chlorobium chlorochromatii (strain CaD3).